The chain runs to 54 residues: U-myrmicitoxin(01)-Tb5a (54 aa).

The N-terminal stretch at 1 to 26 (MQLSHLLLAFAMIFVMTIMYAPQVQA) is a signal peptide. A propeptide spanning residues 27-38 (DAWADANADADV) is cleaved from the precursor.

The protein belongs to the formicidae venom precursor-01 superfamily. In terms of processing, contains 1 disulfide bond. As to expression, expressed by the venom gland.

The protein localises to the secreted. The chain is U-myrmicitoxin(01)-Tb5a from Tetramorium bicarinatum (Tramp ant).